Consider the following 340-residue polypeptide: Ketol-acid reductoisomerase (NADP(+)) (340 aa).

One can recognise a KARI N-terminal Rossmann domain in the interval 1-183 (MAITVYYDKD…GGGRTGIIET (183 aa)). Residues 26-29 (FGSQ), Arg49, Ser52, Ser54, and 84-87 (DEIQ) contribute to the NADP(+) site. His109 is a catalytic residue. Residue Gly135 coordinates NADP(+). One can recognise a KARI C-terminal knotted domain in the interval 184-329 (TFKAETETDL…RNLRAMMPWI (146 aa)). Mg(2+) contacts are provided by Asp192, Glu196, Glu228, and Glu232. Position 253 (Ser253) interacts with substrate.

It belongs to the ketol-acid reductoisomerase family. Mg(2+) is required as a cofactor.

It catalyses the reaction (2R)-2,3-dihydroxy-3-methylbutanoate + NADP(+) = (2S)-2-acetolactate + NADPH + H(+). The enzyme catalyses (2R,3R)-2,3-dihydroxy-3-methylpentanoate + NADP(+) = (S)-2-ethyl-2-hydroxy-3-oxobutanoate + NADPH + H(+). Its pathway is amino-acid biosynthesis; L-isoleucine biosynthesis; L-isoleucine from 2-oxobutanoate: step 2/4. It functions in the pathway amino-acid biosynthesis; L-valine biosynthesis; L-valine from pyruvate: step 2/4. In terms of biological role, involved in the biosynthesis of branched-chain amino acids (BCAA). Catalyzes an alkyl-migration followed by a ketol-acid reduction of (S)-2-acetolactate (S2AL) to yield (R)-2,3-dihydroxy-isovalerate. In the isomerase reaction, S2AL is rearranged via a Mg-dependent methyl migration to produce 3-hydroxy-3-methyl-2-ketobutyrate (HMKB). In the reductase reaction, this 2-ketoacid undergoes a metal-dependent reduction by NADPH to yield (R)-2,3-dihydroxy-isovalerate. This is Ketol-acid reductoisomerase (NADP(+)) from Campylobacter jejuni subsp. jejuni serotype O:6 (strain 81116 / NCTC 11828).